The primary structure comprises 283 residues: Elongation factor Ts (283 aa).

Positions 79 to 82 (TDFV) are involved in Mg(2+) ion dislocation from EF-Tu.

Belongs to the EF-Ts family.

The protein localises to the cytoplasm. Functionally, associates with the EF-Tu.GDP complex and induces the exchange of GDP to GTP. It remains bound to the aminoacyl-tRNA.EF-Tu.GTP complex up to the GTP hydrolysis stage on the ribosome. This is Elongation factor Ts from Shewanella oneidensis (strain ATCC 700550 / JCM 31522 / CIP 106686 / LMG 19005 / NCIMB 14063 / MR-1).